Consider the following 464-residue polypeptide: MAFRIEKDTMGEVQVLADKYWAAQTERSRNNFKIGPAASMPHEIIEAFGYLKKAAAFANHDLGVLPLEKRDLIALACDEILANKLDDQFPLVIWQTGSGTQSNMNVNEVVANRAHVLNGGKLGEKSIIHPNDDVNKSQSSNDTFPTAMHIAAYKKVVEHTIPCVERLQKTFAAKSEAFKNVVKIGRTHLMDATPLTLGQEFSAYAAQLDFGLKALKNTLPHLSQLALGGTAVGTGLNTPKGYDLKVVDYIAKFTALPFVTADNKFEALAAHDAIVETHGALRQLAMSLFKIANDIRLLASGPRSGIGEILIPENEPGSSIMPGKVNPTQCEXMTMVCAQVFGNDTTIAFVGSQGHFQLNVFNPVMIANFLQSAQLLGDACVSFDEHCAVGIEPNYPRIKQQLENSLMLVTALNTHIGYENAAKIAKTAHKNGTTLREEAINLGLVSAEDFDKWVRPEDMVGSLK.

Residues 98–100 (SGT), 129–132 (HPND), 139–141 (SSN), and Thr187 each bind substrate. His188 (proton donor/acceptor) is an active-site residue. Ser318 is an active-site residue. Substrate-binding positions include Ser319 and 324–326 (KVN).

Belongs to the class-II fumarase/aspartase family. Fumarase subfamily. As to quaternary structure, homotetramer.

The protein localises to the cytoplasm. It carries out the reaction (S)-malate = fumarate + H2O. Its pathway is carbohydrate metabolism; tricarboxylic acid cycle; (S)-malate from fumarate: step 1/1. In terms of biological role, involved in the TCA cycle. Catalyzes the stereospecific interconversion of fumarate to L-malate. This is Fumarate hydratase class II from Haemophilus influenzae (strain ATCC 51907 / DSM 11121 / KW20 / Rd).